A 283-amino-acid chain; its full sequence is MEGMDIDLDQELMQKFSCMGTTDKDVLVSEFQRLLGFQLNPAGCAFFLDMTNWNLQAAIGAYYDFESPNINTPSMSFVEDVTIGEGESVPPDTPFTKTWRIQNTGTESWPPGVCLKYVGGDQFGHVNMVMVRSLDPQEISDVSVQMRSPAVPGMYQGQWRMCTATGLFYGDVIWVILSVEEGGLLGVTQQLSSFKTEFNTQPHRSLEGDYNPFASPQKNKQDTNEDHLKDPGGPWEAPLDSIQQDQNGLNHSSVNITPNGLQNNLSVVTYSQGINGPFPFGQS.

Residues 198–254 form a disordered region; sequence FNTQPHRSLEGDYNPFASPQKNKQDTNEDHLKDPGGPWEAPLDSIQQDQNGLNHSSV. Positions 219-230 are enriched in basic and acidic residues; that stretch reads NKQDTNEDHLKD. A compositionally biased stretch (polar residues) spans 241–254; it reads SIQQDQNGLNHSSV.

The protein localises to the cytoplasm. Its subcellular location is the nucleus. Its function is as follows. May have a roles as negative regulator of innate antiviral response. This Danio rerio (Zebrafish) protein is Protein ILRUN (ilrun).